A 126-amino-acid polypeptide reads, in one-letter code: Ribosome-binding factor A (126 aa).

It belongs to the RbfA family. Monomer. Binds 30S ribosomal subunits, but not 50S ribosomal subunits or 70S ribosomes.

It localises to the cytoplasm. Its function is as follows. One of several proteins that assist in the late maturation steps of the functional core of the 30S ribosomal subunit. Associates with free 30S ribosomal subunits (but not with 30S subunits that are part of 70S ribosomes or polysomes). Required for efficient processing of 16S rRNA. May interact with the 5'-terminal helix region of 16S rRNA. This Nitrosospira multiformis (strain ATCC 25196 / NCIMB 11849 / C 71) protein is Ribosome-binding factor A.